We begin with the raw amino-acid sequence, 128 residues long: Global transcriptional regulator Spx 1 (128 aa).

Residues Cys10 and Cys13 are joined by a disulfide bond.

It belongs to the ArsC family. Spx subfamily. In terms of assembly, interacts with the C-terminal domain of the alpha subunit of the RNAP.

It localises to the cytoplasm. Functionally, global transcriptional regulator that plays a key role in stress response and exerts either positive or negative regulation of genes. Acts by interacting with the C-terminal domain of the alpha subunit of the RNA polymerase (RNAP). This interaction can enhance binding of RNAP to the promoter region of target genes and stimulate their transcription, or block interaction of RNAP with activator. This Lactococcus lactis subsp. lactis (strain IL1403) (Streptococcus lactis) protein is Global transcriptional regulator Spx 1.